The following is a 738-amino-acid chain: NAD(P)H-quinone oxidoreductase subunit 5, chloroplastic (738 aa).

Transmembrane regions (helical) follow at residues 9–29, 39–59, 89–109, 125–145, 147–167, 185–205, 219–239, 258–278, 280–300, 327–347, 354–374, 396–416, 425–445, 542–562, 610–630, 691–711, and 717–737; these read WVIP…LFLI, IWAF…LHLS, VDPL…LVLI, FVYI…SNLI, IYFF…FWFT, GDFG…SLEF, NGIN…GAVA, TPIS…FLLA, LLPL…VGTI, LGYM…FHLI, ALLF…VGYS, TTFL…CFWS, WLYS…TAFY, LFPL…GIPF, SLAI…YSFF, GVID…GEEI, and GRIS…LFFI.

Belongs to the complex I subunit 5 family. As to quaternary structure, NDH is composed of at least 16 different subunits, 5 of which are encoded in the nucleus.

It localises to the plastid. The protein localises to the chloroplast thylakoid membrane. The catalysed reaction is a plastoquinone + NADH + (n+1) H(+)(in) = a plastoquinol + NAD(+) + n H(+)(out). It carries out the reaction a plastoquinone + NADPH + (n+1) H(+)(in) = a plastoquinol + NADP(+) + n H(+)(out). NDH shuttles electrons from NAD(P)H:plastoquinone, via FMN and iron-sulfur (Fe-S) centers, to quinones in the photosynthetic chain and possibly in a chloroplast respiratory chain. The immediate electron acceptor for the enzyme in this species is believed to be plastoquinone. Couples the redox reaction to proton translocation, and thus conserves the redox energy in a proton gradient. In Saccharum hybrid (Sugarcane), this protein is NAD(P)H-quinone oxidoreductase subunit 5, chloroplastic (ndhF).